Reading from the N-terminus, the 228-residue chain is Mediator of RNA polymerase II transcription subunit 7-B (228 aa).

It belongs to the Mediator complex subunit 7 family. Component of the Mediator complex.

Its subcellular location is the nucleus. Component of the Mediator complex, a coactivator involved in the regulated transcription of nearly all RNA polymerase II-dependent genes. Mediator functions as a bridge to convey information from gene-specific regulatory proteins to the basal RNA polymerase II transcription machinery. Mediator is recruited to promoters by direct interactions with regulatory proteins and serves as a scaffold for the assembly of a functional preinitiation complex with RNA polymerase II and the general transcription factors. In Xenopus laevis (African clawed frog), this protein is Mediator of RNA polymerase II transcription subunit 7-B (med7-b).